A 257-amino-acid chain; its full sequence is Aspartate/glutamate leucyltransferase (257 aa).

It belongs to the R-transferase family. Bpt subfamily.

It is found in the cytoplasm. It carries out the reaction N-terminal L-glutamyl-[protein] + L-leucyl-tRNA(Leu) = N-terminal L-leucyl-L-glutamyl-[protein] + tRNA(Leu) + H(+). The enzyme catalyses N-terminal L-aspartyl-[protein] + L-leucyl-tRNA(Leu) = N-terminal L-leucyl-L-aspartyl-[protein] + tRNA(Leu) + H(+). Its function is as follows. Functions in the N-end rule pathway of protein degradation where it conjugates Leu from its aminoacyl-tRNA to the N-termini of proteins containing an N-terminal aspartate or glutamate. The chain is Aspartate/glutamate leucyltransferase from Sphingopyxis alaskensis (strain DSM 13593 / LMG 18877 / RB2256) (Sphingomonas alaskensis).